A 395-amino-acid chain; its full sequence is Phosphoglycerate kinase (395 aa).

Residues 21–23 (DLN), Arg-36, 59–62 (HLGR), Arg-114, and Arg-147 each bind substrate. Residues Lys-198, Glu-320, and 346–349 (GGDT) contribute to the ATP site.

It belongs to the phosphoglycerate kinase family. Monomer.

It localises to the cytoplasm. It catalyses the reaction (2R)-3-phosphoglycerate + ATP = (2R)-3-phospho-glyceroyl phosphate + ADP. The protein operates within carbohydrate degradation; glycolysis; pyruvate from D-glyceraldehyde 3-phosphate: step 2/5. This Nitrosospira multiformis (strain ATCC 25196 / NCIMB 11849 / C 71) protein is Phosphoglycerate kinase.